Reading from the N-terminus, the 171-residue chain is Shikimate kinase (171 aa).

Residue glycine 14–threonine 19 participates in ATP binding. Serine 18 contributes to the Mg(2+) binding site. Residues aspartate 36, arginine 60, and glycine 82 each coordinate substrate. Position 120 (arginine 120) interacts with ATP. Arginine 139 provides a ligand contact to substrate. Glutamine 156 lines the ATP pocket.

The protein belongs to the shikimate kinase family. In terms of assembly, monomer. The cofactor is Mg(2+).

It is found in the cytoplasm. It catalyses the reaction shikimate + ATP = 3-phosphoshikimate + ADP + H(+). It functions in the pathway metabolic intermediate biosynthesis; chorismate biosynthesis; chorismate from D-erythrose 4-phosphate and phosphoenolpyruvate: step 5/7. Functionally, catalyzes the specific phosphorylation of the 3-hydroxyl group of shikimic acid using ATP as a cosubstrate. The chain is Shikimate kinase from Shewanella oneidensis (strain ATCC 700550 / JCM 31522 / CIP 106686 / LMG 19005 / NCIMB 14063 / MR-1).